The primary structure comprises 383 residues: Succinyl-diaminopimelate desuccinylase (383 aa).

Zn(2+) is bound at residue H79. D81 is an active-site residue. D110 is a Zn(2+) binding site. The Proton acceptor role is filled by E141. Residues E142, E170, and H355 each coordinate Zn(2+).

It belongs to the peptidase M20A family. DapE subfamily. In terms of assembly, homodimer. Zn(2+) is required as a cofactor. Requires Co(2+) as cofactor.

It catalyses the reaction N-succinyl-(2S,6S)-2,6-diaminopimelate + H2O = (2S,6S)-2,6-diaminopimelate + succinate. Its pathway is amino-acid biosynthesis; L-lysine biosynthesis via DAP pathway; LL-2,6-diaminopimelate from (S)-tetrahydrodipicolinate (succinylase route): step 3/3. Functionally, catalyzes the hydrolysis of N-succinyl-L,L-diaminopimelic acid (SDAP), forming succinate and LL-2,6-diaminopimelate (DAP), an intermediate involved in the bacterial biosynthesis of lysine and meso-diaminopimelic acid, an essential component of bacterial cell walls. The sequence is that of Succinyl-diaminopimelate desuccinylase from Helicobacter pylori (strain ATCC 700392 / 26695) (Campylobacter pylori).